A 648-amino-acid polypeptide reads, in one-letter code: MRIAKILLPVSKLFPLDYLITEDLELNIGDLVVVHFRNQELTGIVWELATNSEAKKIKTIKAKVPLNLNISLEVLALIKWMSSYYMSELGSIAKLVLPINIAEKPIKIKEQQVKNYFVLPQLSEEQKQAVTIFNESNKPTLIKGVTGSGKTEIYFHIIADHLMKGQQVLIMLPEIALSRQIINRFIDRFGFEPIIWNSSVTKAQKKMILRGILSDKVKVVIGARSSLFLPFHNLGLIVIDEEHDDSYKQDDNILYNARDTAIVRGVFDKAKIVLCSATPSLETIYNIKTHKYQLVTLVNRYKNIDLPNIEIIDMTKEKLPKNSYLSKILIDAIKGNLENKKQVLLFLNRRGYAPLMLCKACGHRFTCRFCSAWMVLHKATKTLECHHCGYQSKIFSSCPECLEDETLTICGPGIERIEEEAMLLFPKSKIAVISKDHAKTPAKIAQLLHQMENLEIDILIGTQIITKGYHFPNLTLVGVIDADLGSNNAELRASERTFQLLHQVGGRAGRGDSKGVVYLQSYYPDNIIFSYVKVGDEDSFFTNELEIRKAANMPPFSKTASLILSGFSESKILDIAKNIVQIAPKANVKILGPARALMSKLAGKYRYRILIIADKKFNLQQYLKFWLSLIKIPSYCQIKIDIDPKTFY.

The Helicase ATP-binding domain occupies 131–297 (TIFNESNKPT…KTHKYQLVTL (167 aa)). 144–151 (GVTGSGKT) serves as a coordination point for ATP. Residues 240 to 243 (DEEH) carry the DEAH box motif. The Zn(2+) site is built by Cys-358, Cys-361, Cys-367, Cys-370, Cys-385, Cys-388, Cys-398, and Cys-401. A Helicase C-terminal domain is found at 393 to 548 (KIFSSCPECL…SFFTNELEIR (156 aa)).

This sequence belongs to the helicase family. PriA subfamily. As to quaternary structure, component of the replication restart primosome. Requires Zn(2+) as cofactor.

The catalysed reaction is Couples ATP hydrolysis with the unwinding of duplex DNA by translocating in the 3'-5' direction.. It catalyses the reaction ATP + H2O = ADP + phosphate + H(+). In terms of biological role, initiates the restart of stalled replication forks, which reloads the replicative helicase on sites other than the origin of replication. Recognizes and binds to abandoned replication forks and remodels them to uncover a helicase loading site. Promotes assembly of the primosome at these replication forks. The sequence is that of Replication restart protein PriA from Rickettsia typhi (strain ATCC VR-144 / Wilmington).